The sequence spans 452 residues: Interferon-induced protein 44-like (452 aa).

The 159-residue stretch at 1 to 159 (MEVTTRLTWN…YLECEVFRVE (159 aa)) folds into the TLDc domain.

This sequence belongs to the IFI44 family. As to quaternary structure, interacts with FKBP5; this interaction modulates IKBKB and IKBKE kinase activities.

It is found in the cytoplasm. Type I interferon-stimulated gene (ISG) that plays a critical role in antiviral and antibacterial activity. During bacterial infection, promotes macrophage differentiation and facilitates inflammatory cytokine secretion. Plays a role in the control of respiratory syncytial virus/RSV infection, reducing the ability of the virus to replicate. Exhibits a low antiviral activity against hepatitis C virus. Also acts as a feedback regulator of IFN responses by negatively regulating IKBKB and IKBKE kinase activities through interaction with FKBP5. The polypeptide is Interferon-induced protein 44-like (IFI44L) (Homo sapiens (Human)).